Reading from the N-terminus, the 608-residue chain is MAASSSSSSPAAASAPFAAPGPHRRPGLALRPSPPTPPSSSLSCCRASPAAAAVSSVSATAAPNRGPRGMGLRCRASEGAAAAARKEAPLKVMISGAPASGKGTQCRMIVEKYGLVHISTGDLLRAEVSSGTEIGKKAKEYMDNGMLVPDQVVTDMVVSRLSQPDVRERGWLLDGYPRSYAQAQSLESMKIRPDIFIVLEVPDDILIDRCVGRRLDPETGKIYHIKNFPPENDEVSARLVTRSDDTFEKVKSRLDTYKQNSEAVIPTYSDLLNQIDGNRQVEVVFNEIDSLLQKICENASFNMLAKTNGKPQDSKDTTASKNEFRGIPTRLNNIPHSREIRKYFYNDVLVATRHAVEDKKTRLQIDINIPELNPEMDVYRIGTLMELVRELSLSFADDGKRVKVCVQGSMGQGAFAGIPLQLAGTRKILEIMDWGEYGAKGTFINFGAVGASEVDKEDDMFILIAPQNAVGNCIIDDMKAMTDAAGDRPVILVNPRLKDMPGSSGVMQTMGRDMRLKYAASFETCYSFRLLFYAGSFYPIMGALRMAYPNKYEIYRRVDEPNGQERYVLLEEFVEKPTPDEITNAFRPRKNENEKSASGFWGFLSGIL.

Over residues 1–20 (MAASSSSSSPAAASAPFAAP) the composition is skewed to low complexity. Positions 1 to 44 (MAASSSSSSPAAASAPFAAPGPHRRPGLALRPSPPTPPSSSLSC) are disordered. The transit peptide at 1-75 (MAASSSSSSP…GPRGMGLRCR (75 aa)) directs the protein to the chloroplast. 99–104 (ASGKGT) provides a ligand contact to ATP. Positions 119–148 (STGDLLRAEVSSGTEIGKKAKEYMDNGMLV) are NMP. Residues T120, R125, 146 to 148 (MLV), 175 to 178 (GYPR), and Q182 contribute to the AMP site. Residues R209, R213, and 222–223 (IY) each bind ATP. Positions 212–245 (GRRLDPETGKIYHIKNFPPENDEVSARLVTRSDD) are LID. AMP-binding residues include R242 and R253.

This sequence belongs to the adenylate kinase family.

It is found in the plastid. It localises to the chloroplast. The catalysed reaction is AMP + ATP = 2 ADP. Functionally, catalyzes the reversible transfer of the terminal phosphate group between ATP and AMP. Plays an important role in cellular energy homeostasis and in adenine nucleotide metabolism. The chain is Probable adenylate kinase 5, chloroplastic from Oryza sativa subsp. japonica (Rice).